We begin with the raw amino-acid sequence, 195 residues long: Probable molybdenum cofactor guanylyltransferase (195 aa).

GTP is bound by residues 8–10 (LSG), K20, D65, and D96. D96 serves as a coordination point for Mg(2+).

The protein belongs to the MobA family. Mg(2+) is required as a cofactor.

The protein resides in the cytoplasm. It catalyses the reaction Mo-molybdopterin + GTP + H(+) = Mo-molybdopterin guanine dinucleotide + diphosphate. Functionally, transfers a GMP moiety from GTP to Mo-molybdopterin (Mo-MPT) cofactor (Moco or molybdenum cofactor) to form Mo-molybdopterin guanine dinucleotide (Mo-MGD) cofactor. The chain is Probable molybdenum cofactor guanylyltransferase from Bacillus licheniformis (strain ATCC 14580 / DSM 13 / JCM 2505 / CCUG 7422 / NBRC 12200 / NCIMB 9375 / NCTC 10341 / NRRL NRS-1264 / Gibson 46).